The sequence spans 265 residues: Apolipoprotein A-I (265 aa).

The first 18 residues, methionine 1–alanine 18, serve as a signal peptide directing secretion. 2 consecutive repeat copies span residues leucine 67–glycine 88 and proline 89–asparagine 110. The 10 X approximate tandem repeats stretch occupies residues leucine 67 to glutamine 265. Methionine 109 carries the methionine sulfoxide modification. One copy of the 3; half-length repeat lies at lysine 111–glutamine 121. 5 tandem repeats follow at residues proline 122 to valine 142, proline 144 to threonine 165, proline 166 to alanine 187, proline 188 to glycine 209, and serine 210 to lysine 230. One copy of the 9; half-length repeat lies at proline 231–leucine 241. Repeat unit 10 spans residues proline 242 to glutamine 265.

The protein belongs to the apolipoprotein A1/A4/E family. Homodimer. Interacts with APOA1BP and CLU. Component of a sperm activating protein complex (SPAP), consisting of APOA1, an immunoglobulin heavy chain, an immunoglobulin light chain and albumin. Interacts with NDRG1. Interacts with SCGB3A2. Interacts with NAXE and YJEFN3. Glycosylated. In terms of processing, palmitoylated. Post-translationally, phosphorylation sites are present in the extracellular medium. In terms of tissue distribution, major protein of plasma HDL, also found in chylomicrons.

Its subcellular location is the secreted. Functionally, participates in the reverse transport of cholesterol from tissues to the liver for excretion by promoting cholesterol efflux from tissues and by acting as a cofactor for the lecithin cholesterol acyltransferase (LCAT). As part of the SPAP complex, activates spermatozoa motility. This chain is Apolipoprotein A-I (APOA1), found in Balaenoptera acutorostrata scammoni (North Pacific minke whale).